We begin with the raw amino-acid sequence, 76 residues long: UPF0291 protein Aflv_1503 (76 aa).

The segment at 56-76 (DPNGNDVTPQKLKDSKKKRLH) is disordered.

The protein belongs to the UPF0291 family.

Its subcellular location is the cytoplasm. In Anoxybacillus flavithermus (strain DSM 21510 / WK1), this protein is UPF0291 protein Aflv_1503.